A 553-amino-acid chain; its full sequence is uncharacterized protein (553 aa).

2 consecutive transmembrane segments (helical) span residues 6–26 (IKIF…QVDA) and 524–544 (SYWI…GYVF).

To M.jannaschii MJ0795 and MJ1506.

The protein resides in the cell membrane. This is an uncharacterized protein from Methanocaldococcus jannaschii (strain ATCC 43067 / DSM 2661 / JAL-1 / JCM 10045 / NBRC 100440) (Methanococcus jannaschii).